The sequence spans 874 residues: UPF0182 protein Sfum_2137 (874 aa).

The next 7 helical transmembrane spans lie at 7 to 27, 57 to 77, 110 to 130, 171 to 191, 208 to 228, 252 to 272, and 283 to 303; these read WPLI…LSSL, IVFG…FWVA, SLWV…LPIF, RRLL…YLLE, LHLS…YVLQ, VIWA…FSMI, and PLVV…SAFL.

This sequence belongs to the UPF0182 family.

The protein localises to the cell membrane. This Syntrophobacter fumaroxidans (strain DSM 10017 / MPOB) protein is UPF0182 protein Sfum_2137.